Consider the following 709-residue polypeptide: Ribosomal RNA large subunit methyltransferase K/L (709 aa).

Residues 43–154 (LAYRITLWTR…NGVITIAMNF (112 aa)) form the THUMP domain.

This sequence belongs to the methyltransferase superfamily. RlmKL family.

It is found in the cytoplasm. The enzyme catalyses guanosine(2445) in 23S rRNA + S-adenosyl-L-methionine = N(2)-methylguanosine(2445) in 23S rRNA + S-adenosyl-L-homocysteine + H(+). It catalyses the reaction guanosine(2069) in 23S rRNA + S-adenosyl-L-methionine = N(2)-methylguanosine(2069) in 23S rRNA + S-adenosyl-L-homocysteine + H(+). Its function is as follows. Specifically methylates the guanine in position 2445 (m2G2445) and the guanine in position 2069 (m7G2069) of 23S rRNA. The chain is Ribosomal RNA large subunit methyltransferase K/L from Shewanella baltica (strain OS185).